Consider the following 516-residue polypeptide: Propionyl-CoA carboxylase, carboxyltransferase subunit (516 aa).

The tract at residues 1–32 (MTMEDRIDELREKREEALKGGGEDRIASQHDK) is disordered. Residues 3–259 (MEDRIDELRE…NNVEDPPRVE (257 aa)) form the CoA carboxyltransferase N-terminal domain. One can recognise a CoA carboxyltransferase C-terminal domain in the interval 263–509 (DPERVADELE…KSKRKSQPDK (247 aa)).

Belongs to the AccD/PCCB family. The propionyl coenzyme A carboxylase (PCC) complex is composed of three subunits: PccA (biotin carboxylase and biotin-carboxyl carrier), PccB (carboxyltransferase) and PccX.

It carries out the reaction propanoyl-CoA + hydrogencarbonate + ATP = (S)-methylmalonyl-CoA + ADP + phosphate + H(+). Its pathway is metabolic intermediate metabolism; propanoyl-CoA degradation; succinyl-CoA from propanoyl-CoA: step 1/3. Functionally, part of the propionyl coenzyme A carboxylase (PCC) complex involved in propionate utilization and in the production of the poly(3-hydroxybutyrate-co-3-hydroxyvalerate)(PHBV), which is a water-insoluble biopolymer used as intracellular energy reserve material when cells grow under conditions of nutrient limitation. The complex catalyzes the carboxylation of propionyl-CoA to methylmalonyl-CoA. PCC is also able to catalyze the carboxylation of acetyl-CoA. This is Propionyl-CoA carboxylase, carboxyltransferase subunit from Haloferax mediterranei (strain ATCC 33500 / DSM 1411 / JCM 8866 / NBRC 14739 / NCIMB 2177 / R-4) (Halobacterium mediterranei).